A 210-amino-acid polypeptide reads, in one-letter code: Thiamine-phosphate synthase (210 aa).

Residues 38–42 (QFREK) and Asn70 each bind 4-amino-2-methyl-5-(diphosphooxymethyl)pyrimidine. Mg(2+) is bound by residues Asp71 and Asp90. Ser107 lines the 4-amino-2-methyl-5-(diphosphooxymethyl)pyrimidine pocket. 132-134 (TKT) provides a ligand contact to 2-[(2R,5Z)-2-carboxy-4-methylthiazol-5(2H)-ylidene]ethyl phosphate. Residue Lys135 participates in 4-amino-2-methyl-5-(diphosphooxymethyl)pyrimidine binding. 183-184 (IS) lines the 2-[(2R,5Z)-2-carboxy-4-methylthiazol-5(2H)-ylidene]ethyl phosphate pocket.

This sequence belongs to the thiamine-phosphate synthase family. Mg(2+) is required as a cofactor.

It catalyses the reaction 2-[(2R,5Z)-2-carboxy-4-methylthiazol-5(2H)-ylidene]ethyl phosphate + 4-amino-2-methyl-5-(diphosphooxymethyl)pyrimidine + 2 H(+) = thiamine phosphate + CO2 + diphosphate. The enzyme catalyses 2-(2-carboxy-4-methylthiazol-5-yl)ethyl phosphate + 4-amino-2-methyl-5-(diphosphooxymethyl)pyrimidine + 2 H(+) = thiamine phosphate + CO2 + diphosphate. The catalysed reaction is 4-methyl-5-(2-phosphooxyethyl)-thiazole + 4-amino-2-methyl-5-(diphosphooxymethyl)pyrimidine + H(+) = thiamine phosphate + diphosphate. Its pathway is cofactor biosynthesis; thiamine diphosphate biosynthesis; thiamine phosphate from 4-amino-2-methyl-5-diphosphomethylpyrimidine and 4-methyl-5-(2-phosphoethyl)-thiazole: step 1/1. In terms of biological role, condenses 4-methyl-5-(beta-hydroxyethyl)thiazole monophosphate (THZ-P) and 2-methyl-4-amino-5-hydroxymethyl pyrimidine pyrophosphate (HMP-PP) to form thiamine monophosphate (TMP). The sequence is that of Thiamine-phosphate synthase from Archaeoglobus fulgidus (strain ATCC 49558 / DSM 4304 / JCM 9628 / NBRC 100126 / VC-16).